Here is a 123-residue protein sequence, read N- to C-terminus: Small ribosomal subunit protein uS12 (123 aa).

Position 89 is a 3-methylthioaspartic acid (Asp-89).

This sequence belongs to the universal ribosomal protein uS12 family. Part of the 30S ribosomal subunit. Contacts proteins S8 and S17. May interact with IF1 in the 30S initiation complex.

Its function is as follows. With S4 and S5 plays an important role in translational accuracy. Functionally, interacts with and stabilizes bases of the 16S rRNA that are involved in tRNA selection in the A site and with the mRNA backbone. Located at the interface of the 30S and 50S subunits, it traverses the body of the 30S subunit contacting proteins on the other side and probably holding the rRNA structure together. The combined cluster of proteins S8, S12 and S17 appears to hold together the shoulder and platform of the 30S subunit. In Rhodopseudomonas palustris (strain HaA2), this protein is Small ribosomal subunit protein uS12.